A 191-amino-acid polypeptide reads, in one-letter code: Putative glutathione-dependent formaldehyde-activating enzyme (191 aa).

The region spanning 20–166 (FPGGNLYCLC…FQSLGLQTYD (147 aa)) is the CENP-V/GFA domain. Residues C27, C29, C48, C50, C53, C95, and C98 each coordinate Zn(2+).

The protein belongs to the Gfa family. Requires Zn(2+) as cofactor.

The enzyme catalyses S-(hydroxymethyl)glutathione = glutathione + formaldehyde. The protein operates within one-carbon metabolism; formaldehyde degradation; formate from formaldehyde (glutathione route): step 1/3. Its function is as follows. Catalyzes the condensation of formaldehyde and glutathione to S-hydroxymethylglutathione. This chain is Putative glutathione-dependent formaldehyde-activating enzyme, found in Aspergillus flavus (strain ATCC 200026 / FGSC A1120 / IAM 13836 / NRRL 3357 / JCM 12722 / SRRC 167).